A 357-amino-acid polypeptide reads, in one-letter code: UDP-N-acetylglucosamine--N-acetylmuramyl-(pentapeptide) pyrophosphoryl-undecaprenol N-acetylglucosamine transferase (357 aa).

Residues 13–15 (TGG), N125, R161, S189, I243, and Q288 contribute to the UDP-N-acetyl-alpha-D-glucosamine site.

It belongs to the glycosyltransferase 28 family. MurG subfamily.

It localises to the cell inner membrane. The enzyme catalyses di-trans,octa-cis-undecaprenyl diphospho-N-acetyl-alpha-D-muramoyl-L-alanyl-D-glutamyl-meso-2,6-diaminopimeloyl-D-alanyl-D-alanine + UDP-N-acetyl-alpha-D-glucosamine = di-trans,octa-cis-undecaprenyl diphospho-[N-acetyl-alpha-D-glucosaminyl-(1-&gt;4)]-N-acetyl-alpha-D-muramoyl-L-alanyl-D-glutamyl-meso-2,6-diaminopimeloyl-D-alanyl-D-alanine + UDP + H(+). Its pathway is cell wall biogenesis; peptidoglycan biosynthesis. In terms of biological role, cell wall formation. Catalyzes the transfer of a GlcNAc subunit on undecaprenyl-pyrophosphoryl-MurNAc-pentapeptide (lipid intermediate I) to form undecaprenyl-pyrophosphoryl-MurNAc-(pentapeptide)GlcNAc (lipid intermediate II). The protein is UDP-N-acetylglucosamine--N-acetylmuramyl-(pentapeptide) pyrophosphoryl-undecaprenol N-acetylglucosamine transferase of Polynucleobacter asymbioticus (strain DSM 18221 / CIP 109841 / QLW-P1DMWA-1) (Polynucleobacter necessarius subsp. asymbioticus).